Consider the following 631-residue polypeptide: Phosphomethylpyrimidine synthase (631 aa).

Residues Asn-239, Met-268, Tyr-297, His-333, 353–355, 394–397, and Glu-433 contribute to the substrate site; these read SRG and DGLR. His-437 is a Zn(2+) binding site. Tyr-460 provides a ligand contact to substrate. His-501 contributes to the Zn(2+) binding site. Residues Cys-581, Cys-584, and Cys-589 each coordinate [4Fe-4S] cluster.

The protein belongs to the ThiC family. As to quaternary structure, homodimer. [4Fe-4S] cluster is required as a cofactor.

It carries out the reaction 5-amino-1-(5-phospho-beta-D-ribosyl)imidazole + S-adenosyl-L-methionine = 4-amino-2-methyl-5-(phosphooxymethyl)pyrimidine + CO + 5'-deoxyadenosine + formate + L-methionine + 3 H(+). Its pathway is cofactor biosynthesis; thiamine diphosphate biosynthesis. Functionally, catalyzes the synthesis of the hydroxymethylpyrimidine phosphate (HMP-P) moiety of thiamine from aminoimidazole ribotide (AIR) in a radical S-adenosyl-L-methionine (SAM)-dependent reaction. The polypeptide is Phosphomethylpyrimidine synthase (Salmonella arizonae (strain ATCC BAA-731 / CDC346-86 / RSK2980)).